A 971-amino-acid chain; its full sequence is uncharacterized protein (971 aa).

This is an uncharacterized protein from Caenorhabditis elegans.